Consider the following 146-residue polypeptide: Transcriptional regulator MraZ (146 aa).

SpoVT-AbrB domains are found at residues 5–50 (SSFH…TFNE) and 77–120 (ACEC…SREQ).

Belongs to the MraZ family. In terms of assembly, forms oligomers.

The protein resides in the cytoplasm. It localises to the nucleoid. The protein is Transcriptional regulator MraZ of Desulforapulum autotrophicum (strain ATCC 43914 / DSM 3382 / VKM B-1955 / HRM2) (Desulfobacterium autotrophicum).